Consider the following 134-residue polypeptide: Phosphoribosyl-AMP cyclohydrolase (134 aa).

Aspartate 80 contacts Mg(2+). Cysteine 81 provides a ligand contact to Zn(2+). Residues aspartate 82 and aspartate 84 each contribute to the Mg(2+) site. Zn(2+)-binding residues include cysteine 98 and cysteine 105.

It belongs to the PRA-CH family. In terms of assembly, homodimer. Mg(2+) is required as a cofactor. The cofactor is Zn(2+).

It is found in the cytoplasm. The catalysed reaction is 1-(5-phospho-beta-D-ribosyl)-5'-AMP + H2O = 1-(5-phospho-beta-D-ribosyl)-5-[(5-phospho-beta-D-ribosylamino)methylideneamino]imidazole-4-carboxamide. It functions in the pathway amino-acid biosynthesis; L-histidine biosynthesis; L-histidine from 5-phospho-alpha-D-ribose 1-diphosphate: step 3/9. Its function is as follows. Catalyzes the hydrolysis of the adenine ring of phosphoribosyl-AMP. The chain is Phosphoribosyl-AMP cyclohydrolase from Bordetella avium (strain 197N).